The sequence spans 794 residues: uncharacterized protein (794 aa).

A signal peptide spans 1–22 (MKFKYGAIVFSGLLGVSAILAA). Residue Cys23 is the site of N-palmitoyl cysteine attachment. Cys23 carries S-diacylglycerol cysteine lipidation. Composition is skewed to polar residues over residues 182–200 (TSVQ…NNGV) and 245–261 (QMST…DANQ). 5 disordered regions span residues 182–208 (TSVQ…KIDK), 222–261 (NKAK…DANQ), 474–529 (FKIK…GKNG), 566–594 (SAAK…TEQK), and 737–757 (KNEK…RGKQ). Positions 475-501 (KIKSSNKSKSSSSKSSTKAETGKTSGG) are enriched in low complexity. Over residues 511–526 (GAQNQGKKGEGAQNQG) the composition is skewed to polar residues. Residues 567-576 (AAKKEDKKSG) show a composition bias toward basic and acidic residues. A compositionally biased stretch (polar residues) spans 577–593 (ESTTEQTQIQSKSVTEQ). A compositionally biased stretch (basic and acidic residues) spans 737–751 (KNEKKEGSDQKDSKS).

This sequence belongs to the MG185/MG260 family.

Its subcellular location is the cell membrane. This is an uncharacterized protein from Mycoplasma pneumoniae (strain ATCC 29342 / M129 / Subtype 1) (Mycoplasmoides pneumoniae).